The primary structure comprises 429 residues: Probable M18 family aminopeptidase 2 (429 aa).

His82, His156, and His401 together coordinate Zn(2+).

It belongs to the peptidase M18 family. Zn(2+) serves as cofactor.

This chain is Probable M18 family aminopeptidase 2, found in Pseudomonas aeruginosa (strain UCBPP-PA14).